The sequence spans 138 residues: NADH dehydrogenase [ubiquinone] 1 alpha subcomplex subunit N7BM (138 aa).

Belongs to the complex I NDUFA12 subunit family. Complex I is composed of 42 different subunits.

The protein resides in the mitochondrion inner membrane. In terms of biological role, accessory subunit of the mitochondrial membrane respiratory chain NADH dehydrogenase (Complex I), that is believed not to be involved in catalysis. Complex I functions in the transfer of electrons from NADH to the respiratory chain. The immediate electron acceptor for the enzyme is believed to be ubiquinone. In Yarrowia lipolytica (strain CLIB 122 / E 150) (Yeast), this protein is NADH dehydrogenase [ubiquinone] 1 alpha subcomplex subunit N7BM.